A 453-amino-acid chain; its full sequence is Allantoinase (453 aa).

The Zn(2+) site is built by histidine 59, histidine 61, lysine 146, histidine 186, histidine 242, and aspartate 315. At lysine 146 the chain carries N6-carboxylysine.

This sequence belongs to the metallo-dependent hydrolases superfamily. Allantoinase family. In terms of assembly, homotetramer. The cofactor is Zn(2+). Post-translationally, carboxylation allows a single lysine to coordinate two zinc ions.

It carries out the reaction (S)-allantoin + H2O = allantoate + H(+). It participates in nitrogen metabolism; (S)-allantoin degradation; allantoate from (S)-allantoin: step 1/1. Catalyzes the conversion of allantoin (5-ureidohydantoin) to allantoic acid by hydrolytic cleavage of the five-member hydantoin ring. This is Allantoinase from Salmonella agona (strain SL483).